Reading from the N-terminus, the 898-residue chain is Neutral alpha-glucosidase C (898 aa).

The segment at 154-173 (QRATKGNGQNTPAATSQENQ) is disordered. The segment covering 157 to 171 (TKGNGQNTPAATSQE) has biased composition (polar residues). Aspartate 495 (nucleophile) is an active-site residue. Residue glutamate 498 is part of the active site. The Proton donor role is filled by aspartate 571.

The protein belongs to the glycosyl hydrolase 31 family.

It carries out the reaction Hydrolysis of terminal, non-reducing (1-&gt;4)-linked alpha-D-glucose residues with release of alpha-D-glucose.. Has alpha-glucosidase activity. In Mus musculus (Mouse), this protein is Neutral alpha-glucosidase C (Ganc).